The chain runs to 1342 residues: DNA-directed RNA polymerase subunit beta (1342 aa).

The protein belongs to the RNA polymerase beta chain family. As to quaternary structure, the RNAP catalytic core consists of 2 alpha, 1 beta, 1 beta' and 1 omega subunit. When a sigma factor is associated with the core the holoenzyme is formed, which can initiate transcription.

The catalysed reaction is RNA(n) + a ribonucleoside 5'-triphosphate = RNA(n+1) + diphosphate. In terms of biological role, DNA-dependent RNA polymerase catalyzes the transcription of DNA into RNA using the four ribonucleoside triphosphates as substrates. In Actinobacillus pleuropneumoniae serotype 5b (strain L20), this protein is DNA-directed RNA polymerase subunit beta.